The primary structure comprises 292 residues: uncharacterized protein (292 aa).

The first 19 residues, 1–19, serve as a signal peptide directing secretion; it reads MFKKYIFILLLLVTSIVKA. A disordered region spans residues 271–292; that stretch reads KRNNPPLKTNNAKSKNPYDQSK.

This is an uncharacterized protein from Rickettsia bellii (strain RML369-C).